A 78-amino-acid chain; its full sequence is uncharacterized protein (78 aa).

The first 27 residues, methionine 1–alanine 27, serve as a signal peptide directing secretion.

This is an uncharacterized protein from Dryophytes versicolor (chameleon treefrog).